Consider the following 314-residue polypeptide: 4-hydroxy-3-methylbut-2-enyl diphosphate reductase (314 aa).

Cys12 lines the [4Fe-4S] cluster pocket. Residues His43 and His81 each coordinate (2E)-4-hydroxy-3-methylbut-2-enyl diphosphate. Residues His43 and His81 each coordinate dimethylallyl diphosphate. The isopentenyl diphosphate site is built by His43 and His81. Cys103 provides a ligand contact to [4Fe-4S] cluster. His131 lines the (2E)-4-hydroxy-3-methylbut-2-enyl diphosphate pocket. Position 131 (His131) interacts with dimethylallyl diphosphate. His131 provides a ligand contact to isopentenyl diphosphate. Catalysis depends on Glu133, which acts as the Proton donor. Position 170 (Thr170) interacts with (2E)-4-hydroxy-3-methylbut-2-enyl diphosphate. Position 198 (Cys198) interacts with [4Fe-4S] cluster. (2E)-4-hydroxy-3-methylbut-2-enyl diphosphate-binding residues include Ser226, Asn228, and Ser271. Positions 226, 228, and 271 each coordinate dimethylallyl diphosphate. Isopentenyl diphosphate-binding residues include Ser226, Asn228, and Ser271.

This sequence belongs to the IspH family. It depends on [4Fe-4S] cluster as a cofactor.

It catalyses the reaction isopentenyl diphosphate + 2 oxidized [2Fe-2S]-[ferredoxin] + H2O = (2E)-4-hydroxy-3-methylbut-2-enyl diphosphate + 2 reduced [2Fe-2S]-[ferredoxin] + 2 H(+). The enzyme catalyses dimethylallyl diphosphate + 2 oxidized [2Fe-2S]-[ferredoxin] + H2O = (2E)-4-hydroxy-3-methylbut-2-enyl diphosphate + 2 reduced [2Fe-2S]-[ferredoxin] + 2 H(+). It functions in the pathway isoprenoid biosynthesis; dimethylallyl diphosphate biosynthesis; dimethylallyl diphosphate from (2E)-4-hydroxy-3-methylbutenyl diphosphate: step 1/1. It participates in isoprenoid biosynthesis; isopentenyl diphosphate biosynthesis via DXP pathway; isopentenyl diphosphate from 1-deoxy-D-xylulose 5-phosphate: step 6/6. Its function is as follows. Catalyzes the conversion of 1-hydroxy-2-methyl-2-(E)-butenyl 4-diphosphate (HMBPP) into a mixture of isopentenyl diphosphate (IPP) and dimethylallyl diphosphate (DMAPP). Acts in the terminal step of the DOXP/MEP pathway for isoprenoid precursor biosynthesis. This chain is 4-hydroxy-3-methylbut-2-enyl diphosphate reductase, found in Shouchella clausii (strain KSM-K16) (Alkalihalobacillus clausii).